The following is a 530-amino-acid chain: Glucose-6-phosphate 1-dehydrogenase (530 aa).

NADP(+) contacts are provided by residues 53 to 60, arginine 87, tyrosine 162, and lysine 186; that span reads GASGDLAK. D-glucose 6-phosphate contacts are provided by residues lysine 186, 216-220, glutamate 254, and aspartate 273; that span reads HYLGK. Histidine 278 acts as the Proton acceptor in catalysis. Position 372 (arginine 372) interacts with NADP(+). Residues lysine 375 and arginine 380 each coordinate D-glucose 6-phosphate. Residues lysine 381, arginine 385, and arginine 408 each coordinate NADP(+). Glutamine 410 is a binding site for D-glucose 6-phosphate. NADP(+)-binding positions include 416 to 418, 436 to 438, arginine 502, tyrosine 518, and tryptophan 524; these read YAK and DLT.

It belongs to the glucose-6-phosphate dehydrogenase family.

The protein localises to the cytoplasm. It localises to the cytosol. It catalyses the reaction D-glucose 6-phosphate + NADP(+) = 6-phospho-D-glucono-1,5-lactone + NADPH + H(+). The protein operates within carbohydrate degradation; pentose phosphate pathway; D-ribulose 5-phosphate from D-glucose 6-phosphate (oxidative stage): step 1/3. Cytosolic glucose-6-phosphate dehydrogenase that catalyzes the first and rate-limiting step of the oxidative branch within the pentose phosphate pathway/shunt, an alternative route to glycolysis for the dissimilation of carbohydrates and a major source of reducing power and metabolic intermediates for fatty acid and nucleic acid biosynthetic processes. The protein is Glucose-6-phosphate 1-dehydrogenase (g6pd) of Takifugu rubripes (Japanese pufferfish).